The sequence spans 812 residues: Lon protease (812 aa).

The Lon N-terminal domain maps to isoleucine 11–isoleucine 204. Glycine 356 to threonine 363 contacts ATP. The 182-residue stretch at glutamate 592 to asparagine 773 folds into the Lon proteolytic domain. Residues serine 679 and lysine 722 contribute to the active site. Residues lysine 745–glutamate 764 are compositionally biased toward basic and acidic residues. The segment at lysine 745–glutamate 766 is disordered.

It belongs to the peptidase S16 family. As to quaternary structure, homohexamer. Organized in a ring with a central cavity. ATP binding and hydrolysis do not affect the oligomeric state of the enzyme.

The protein resides in the cytoplasm. The enzyme catalyses Hydrolysis of proteins in presence of ATP.. Its activity is regulated as follows. Contains an allosteric site (distinct from its active site), whose occupancy by an unfolded polypeptide leads to enzyme activation. Its function is as follows. ATP-dependent serine protease that mediates the selective degradation of mutant and abnormal proteins as well as certain short-lived regulatory proteins. Required for cellular homeostasis and for survival from DNA damage and developmental changes induced by stress. Degrades polypeptides processively to yield small peptide fragments that are 5 to 10 amino acids long. Binds to DNA in a double-stranded, site-specific manner. Endogenous substrates include the regulatory proteins RcsA and SulA, the transcriptional activator SoxS, and UmuD. Its overproduction specifically inhibits translation through at least two different pathways, one of them being the YoeB-YefM toxin-antitoxin system. This is Lon protease from Shigella dysenteriae serotype 1 (strain Sd197).